A 363-amino-acid chain; its full sequence is 1,2-Dihydrovomilenine reductase (363 aa).

In terms of domain architecture, Enoyl reductase (ER) spans 24–352 (GILSPFKFSR…KGDVRYRFVI (329 aa)). Zn(2+) is bound at residue C51. Residue S53 participates in NADP(+) binding. The Zn(2+) site is built by D54, E74, C104, C107, C110, and C118. 12 residues coordinate NADP(+): L193, G195, L196, S215, T216, S217, K220, K221, V278, A280, T302, and R349.

It belongs to the zinc-containing alcohol dehydrogenase family. Class-P subfamily. In terms of assembly, homodimer. It depends on Zn(2+) as a cofactor. In terms of tissue distribution, mainly expressed in mature roots and, to a lower extent, in stems and leaves.

The protein resides in the cytoplasm. It catalyses the reaction 17-O-acetylnorajmaline + NADP(+) = (2R)-1,2-dihydrovomilenine + NADPH + 2 H(+). It carries out the reaction (20S)-19,20-dihydrovomilenine + NADP(+) = vomilenine + NADPH + H(+). The protein operates within alkaloid biosynthesis; ajmaline biosynthesis. Its function is as follows. Alcohol dehydrogenase involved in the biosynthesis of ajmaline-type monoterpenoid indole alkaloids (MIAs) natural products, important plant-derived pharmaceuticals used in the therapy of heart disorders. Catalyzes the conversion of 1,2-dihydrovomilenine to 17-O-acetylnorajmaline, an intermediate chemical in the biosynthesis of ajmaline. Also able, with a lower efficiency, to convert vomilenine into 19,20-dihydrovomilenine. The chain is 1,2-Dihydrovomilenine reductase from Rauvolfia serpentina (Serpentine wood).